The primary structure comprises 338 residues: MTTLRLLISDSYDPWFNLAVEECIFRQMPATQRVLFLWRNADTVVIGRAQNPWKECNTRRMEEDNVRLARRSSGGGAVFHDLGNTCFTFMAGKPEYDKTISTHIVLAALNSLGVMADASGRNDLVVKTPDGDRKVSGSAYRETKDRGFHHGTLLLNADLSRLAIYLNPDKKKLAAKGITSVRSRVANLTELLPGITHKQVCQAVTEAFFVHYGERVDAEVISPDKTPDLPNFAETFARQSSWEWNFGQAPAFSHLLDERFTWGGVELHFDVEKGVITRAQVFTDSLNPAPLEALAERLQGCLYRADKLQETCEALLVDFPEQEKELRELSAWIAEAVR.

One can recognise a BPL/LPL catalytic domain in the interval 29–216 (PATQRVLFLW…AFFVHYGERV (188 aa)). ATP contacts are provided by residues R71, 76-79 (GAVF), and K134. Residue K134 coordinates (R)-lipoate.

The protein belongs to the LplA family. In terms of assembly, monomer.

The protein resides in the cytoplasm. The catalysed reaction is L-lysyl-[lipoyl-carrier protein] + (R)-lipoate + ATP = N(6)-[(R)-lipoyl]-L-lysyl-[lipoyl-carrier protein] + AMP + diphosphate + H(+). It participates in protein modification; protein lipoylation via exogenous pathway; protein N(6)-(lipoyl)lysine from lipoate: step 1/2. Its pathway is protein modification; protein lipoylation via exogenous pathway; protein N(6)-(lipoyl)lysine from lipoate: step 2/2. Its function is as follows. Catalyzes both the ATP-dependent activation of exogenously supplied lipoate to lipoyl-AMP and the transfer of the activated lipoyl onto the lipoyl domains of lipoate-dependent enzymes. The sequence is that of Lipoate-protein ligase A from Salmonella newport (strain SL254).